The following is a 269-amino-acid chain: Nitrogen regulatory protein DAL80 (269 aa).

Residues 31-55 (CQNCFTVKTPLWRRDEHGTVLCNAC) form a GATA-type zinc finger.

The protein localises to the nucleus. In terms of biological role, negative regulator of multiple nitrogen catabolic genes including the allantoin pathway genes. The protein is Nitrogen regulatory protein DAL80 (DAL80) of Saccharomyces cerevisiae (strain ATCC 204508 / S288c) (Baker's yeast).